Reading from the N-terminus, the 337-residue chain is GTPase Obg (337 aa).

Residues 1–159 (MQFIDYVKIY…RWVILELKLL (159 aa)) form the Obg domain. The 172-residue stretch at 160 to 331 (ADVGLIGLPN…LLHYLSEKVG (172 aa)) folds into the OBG-type G domain. Residues 166 to 173 (GLPNAGKS), 191 to 195 (FTTLI), 213 to 216 (DIPG), 283 to 286 (TKID), and 312 to 314 (SAV) contribute to the GTP site. Mg(2+) contacts are provided by Ser173 and Thr193.

This sequence belongs to the TRAFAC class OBG-HflX-like GTPase superfamily. OBG GTPase family. In terms of assembly, monomer. Mg(2+) serves as cofactor.

It is found in the cytoplasm. In terms of biological role, an essential GTPase which binds GTP, GDP and possibly (p)ppGpp with moderate affinity, with high nucleotide exchange rates and a fairly low GTP hydrolysis rate. Plays a role in control of the cell cycle, stress response, ribosome biogenesis and in those bacteria that undergo differentiation, in morphogenesis control. The polypeptide is GTPase Obg (Thermodesulfovibrio yellowstonii (strain ATCC 51303 / DSM 11347 / YP87)).